The following is a 311-amino-acid chain: NAD kinase (311 aa).

The active-site Proton acceptor is Asp89. Residues 89–90 (DG), Arg94, 163–164 (NE), Asp193, and 204–209 (TAYAFS) contribute to the NAD(+) site.

Belongs to the NAD kinase family. It depends on a divalent metal cation as a cofactor.

It localises to the cytoplasm. The enzyme catalyses NAD(+) + ATP = ADP + NADP(+) + H(+). In terms of biological role, involved in the regulation of the intracellular balance of NAD and NADP, and is a key enzyme in the biosynthesis of NADP. Catalyzes specifically the phosphorylation on 2'-hydroxyl of the adenosine moiety of NAD to yield NADP. The sequence is that of NAD kinase from Mycobacterium leprae (strain Br4923).